We begin with the raw amino-acid sequence, 82 residues long: RNA-binding protein Hfq (82 aa).

The region spanning 9 to 68 is the Sm domain; sequence DPFLNTLRKEHVPVSIYLVNGIKLQGKVDSFDQYVIMLKNTVSQMVYKHAISTIVPGRPV.

This sequence belongs to the Hfq family. As to quaternary structure, homohexamer.

Its function is as follows. RNA chaperone that binds small regulatory RNA (sRNAs) and mRNAs to facilitate mRNA translational regulation in response to envelope stress, environmental stress and changes in metabolite concentrations. Also binds with high specificity to tRNAs. The sequence is that of RNA-binding protein Hfq from Methylococcus capsulatus (strain ATCC 33009 / NCIMB 11132 / Bath).